A 144-amino-acid polypeptide reads, in one-letter code: uncharacterized protein (144 aa).

Residues 25–47 (LTLLDGCCVALVLALTAWSGFFV) form a helical membrane-spanning segment.

It is found in the membrane. This is an uncharacterized protein from Treponema pallidum (strain Nichols).